The chain runs to 231 residues: Elongation factor 1-delta (231 aa).

Positions S75–K136 are disordered. Acidic residues predominate over residues A101–E117. The segment covering E118–A127 has biased composition (basic and acidic residues).

The protein belongs to the EF-1-beta/EF-1-delta family. In terms of assembly, EF-1 is composed of 4 subunits: alpha, beta (1B-alpha=beta'), delta (1B-beta), and gamma (1B-gamma).

EF-1-beta and EF-1-beta' stimulate the exchange of GDP bound to EF-1-alpha to GTP. In Beta vulgaris (Sugar beet), this protein is Elongation factor 1-delta.